We begin with the raw amino-acid sequence, 224 residues long: Ribose-5-phosphate isomerase A (224 aa).

Substrate is bound by residues 34 to 37, 87 to 90, and 100 to 103; these read TGST, DGAD, and KGGG. The active-site Proton acceptor is Glu-109. Lys-127 provides a ligand contact to substrate.

This sequence belongs to the ribose 5-phosphate isomerase family. In terms of assembly, homodimer.

The enzyme catalyses aldehydo-D-ribose 5-phosphate = D-ribulose 5-phosphate. It functions in the pathway carbohydrate degradation; pentose phosphate pathway; D-ribose 5-phosphate from D-ribulose 5-phosphate (non-oxidative stage): step 1/1. Catalyzes the reversible conversion of ribose-5-phosphate to ribulose 5-phosphate. The chain is Ribose-5-phosphate isomerase A from Francisella tularensis subsp. tularensis (strain FSC 198).